The chain runs to 382 residues: Innexin-8 (382 aa).

Transmembrane regions (helical) follow at residues 29–49 (LITA…TYVG), 103–123 (QWSS…KFLW), 187–207 (VIKI…AIFL), and 270–290 (IFLF…IAHF).

The protein belongs to the pannexin family.

Its subcellular location is the cell membrane. It localises to the cell junction. The protein resides in the gap junction. Its function is as follows. Structural component of the gap junctions. This is Innexin-8 (inx-8) from Caenorhabditis elegans.